Reading from the N-terminus, the 287-residue chain is Glycine--tRNA ligase alpha subunit (287 aa).

Belongs to the class-II aminoacyl-tRNA synthetase family. In terms of assembly, tetramer of two alpha and two beta subunits.

The protein resides in the cytoplasm. It catalyses the reaction tRNA(Gly) + glycine + ATP = glycyl-tRNA(Gly) + AMP + diphosphate. The polypeptide is Glycine--tRNA ligase alpha subunit (Campylobacter jejuni subsp. jejuni serotype O:23/36 (strain 81-176)).